Here is a 338-residue protein sequence, read N- to C-terminus: Oxygen-dependent coproporphyrinogen-III oxidase (338 aa).

Substrate is bound at residue Ser104. A divalent metal cation is bound by residues His108 and His118. His118 serves as the catalytic Proton donor. Residue 120 to 122 participates in substrate binding; that stretch reads NYR. A divalent metal cation contacts are provided by His152 and His182. Positions 274-309 are important for dimerization; sequence YVEFNLVYDRGTIFGLQTNGRTESILMSLPPLVRWE.

This sequence belongs to the aerobic coproporphyrinogen-III oxidase family. Homodimer. The cofactor is a divalent metal cation.

Its subcellular location is the cytoplasm. It catalyses the reaction coproporphyrinogen III + O2 + 2 H(+) = protoporphyrinogen IX + 2 CO2 + 2 H2O. It participates in porphyrin-containing compound metabolism; protoporphyrin-IX biosynthesis; protoporphyrinogen-IX from coproporphyrinogen-III (O2 route): step 1/1. Involved in the heme and chlorophyll biosynthesis. Catalyzes the aerobic oxidative decarboxylation of propionate groups of rings A and B of coproporphyrinogen-III to yield the vinyl groups in protoporphyrinogen-IX. This chain is Oxygen-dependent coproporphyrinogen-III oxidase, found in Thermosynechococcus vestitus (strain NIES-2133 / IAM M-273 / BP-1).